A 137-amino-acid chain; its full sequence is Cellular retinoic acid-binding protein 1 (137 aa).

The short motif at 21 to 31 (KALGVNAMLRK) is the Nuclear localization signal element. Residue 132–134 (RIY) participates in all-trans-retinoate binding.

The protein belongs to the calycin superfamily. Fatty-acid binding protein (FABP) family.

The protein localises to the cytoplasm. In terms of biological role, cytosolic CRABPs may regulate the access of retinoic acid to the nuclear retinoic acid receptors. The protein is Cellular retinoic acid-binding protein 1 (CRABP1) of Gallus gallus (Chicken).